Here is a 108-residue protein sequence, read N- to C-terminus: Synaptobrevin-1 (108 aa).

A disordered region spans residues 1–25 (MDAQGDAGAQGGSQGPRPSNKRLQQ). Residues 1–85 (MDAQGDAGAQ…KRKYWWKNIK (85 aa)) lie on the Cytoplasmic side of the membrane. One can recognise a v-SNARE coiled-coil homology domain in the interval 22-82 (RLQQTQAQVD…ATLKRKYWWK (61 aa)). A helical; Anchor for type IV membrane protein membrane pass occupies residues 86–106 (MMIIMCAIVVILIIIIVLWAG). Residues 107-108 (GK) are Extracellular-facing.

The protein belongs to the synaptobrevin family. As to quaternary structure, part of the SNARE core complex containing CBG09569/SNAP25, snb-1/VAMP2 and CBG03570/STX1A. This complex binds to cpx-1/CPLX1.

The protein localises to the cytoplasmic vesicle. It is found in the secretory vesicle. Its subcellular location is the synaptic vesicle membrane. It localises to the cell membrane. The protein resides in the synapse. The protein localises to the synaptosome. Its function is as follows. Involved in the targeting and/or fusion of transport vesicles to their target membrane. Acts in neuronal exocytosis of synaptic transmission. Likely to have a role in cholinergic transmisson. Required for viability, coordinated movement and M3 pharynx motor neuron function. The chain is Synaptobrevin-1 from Caenorhabditis briggsae.